A 530-amino-acid polypeptide reads, in one-letter code: Cytochrome P450 monooxygenase sttB (530 aa).

N-linked (GlcNAc...) asparagine glycosylation occurs at asparagine 5. Residues 24-44 (LPILTVALLTGIASAVYINVS) form a helical membrane-spanning segment. Asparagine 230 carries an N-linked (GlcNAc...) asparagine glycan.

It belongs to the cytochrome P450 family. It depends on heme as a cofactor.

Its subcellular location is the membrane. The enzyme catalyses preaspterpenacid acid I + reduced [NADPH--hemoprotein reductase] + O2 = preaspterpenacid acid II + oxidized [NADPH--hemoprotein reductase] + H2O + H(+). Its pathway is secondary metabolite biosynthesis; terpenoid biosynthesis. Functionally, cytochrome P450 monooxygenase; part of the gene cluster that mediates the biosynthesis of aspterpenacids. Performs the C22-oxidative modification of the terpene synthase sttA product preaspterpenacid I to produce preaspterpenacid II. It has still to be determined how preaspterpenacid II is further modified to produce aspterpenacids. This chain is Cytochrome P450 monooxygenase sttB, found in Aspergillus terreus (strain NIH 2624 / FGSC A1156).